A 318-amino-acid polypeptide reads, in one-letter code: HPr kinase/phosphorylase (318 aa).

Catalysis depends on residues His143 and Lys164. 158–165 (GKSGVGKS) provides a ligand contact to ATP. A Mg(2+)-binding site is contributed by Ser165. Asp182 serves as the catalytic Proton acceptor; for phosphorylation activity. Proton donor; for dephosphorylation activity. An important for the catalytic mechanism of both phosphorylation and dephosphorylation region spans residues 206–215 (MEIRGLGILN). Glu207 is a Mg(2+) binding site. Arg248 is an active-site residue. An important for the catalytic mechanism of dephosphorylation region spans residues 269–274 (PVKPGR).

It belongs to the HPrK/P family. As to quaternary structure, homohexamer. Mg(2+) is required as a cofactor.

It carries out the reaction [HPr protein]-L-serine + ATP = [HPr protein]-O-phospho-L-serine + ADP + H(+). The enzyme catalyses [HPr protein]-O-phospho-L-serine + phosphate + H(+) = [HPr protein]-L-serine + diphosphate. In terms of biological role, catalyzes the ATP- as well as the pyrophosphate-dependent phosphorylation of a specific serine residue in HPr, a phosphocarrier protein of the phosphoenolpyruvate-dependent sugar phosphotransferase system (PTS). HprK/P also catalyzes the pyrophosphate-producing, inorganic phosphate-dependent dephosphorylation (phosphorolysis) of seryl-phosphorylated HPr (P-Ser-HPr). The chain is HPr kinase/phosphorylase from Leptospira borgpetersenii serovar Hardjo-bovis (strain JB197).